The sequence spans 285 residues: Sulfotransferase 2A6 (285 aa).

44 to 49 provides a ligand contact to 3'-phosphoadenylyl sulfate; sequence KSGTNW. Residue His-99 is the Proton acceptor of the active site. Residues Arg-121, Ser-129, Tyr-184, 218-223, and 247-249 contribute to the 3'-phosphoadenylyl sulfate site; these read SSFQAM and RKG.

Belongs to the sulfotransferase 1 family. Oligomer.

It is found in the cytoplasm. The protein localises to the cytosol. It carries out the reaction an alcohol + 3'-phosphoadenylyl sulfate = an alkyl sulfate + adenosine 3',5'-bisphosphate + H(+). It catalyses the reaction glycolithocholate + 3'-phosphoadenylyl sulfate = sulfoglycolithocholate + adenosine 3',5'-bisphosphate + H(+). The catalysed reaction is taurolithocholate + 3'-phosphoadenylyl sulfate = taurolithocholate 3-sulfate + adenosine 3',5'-bisphosphate + H(+). The enzyme catalyses 3beta-hydroxyandrost-5-en-17-one + 3'-phosphoadenylyl sulfate = dehydroepiandrosterone 3-sulfate + adenosine 3',5'-bisphosphate + H(+). Functionally, sulfotransferase that utilizes 3'-phospho-5'-adenylyl sulfate (PAPS) as sulfonate donor to catalyze the sulfonation of the hydroxyl group of hydroxysteroids and bile acids. The chain is Sulfotransferase 2A6 from Mus musculus (Mouse).